A 358-amino-acid chain; its full sequence is Polyadenylate-binding protein-interacting protein 11 (358 aa).

Residues 1-19 (MAVVETGAAATAADAGGVV) show a composition bias toward low complexity. Residues 1 to 45 (MAVVETGAAATAADAGGVVIQPPPSSPPSSMTSQDSGVSSDDQNH) are disordered. A compositionally biased stretch (polar residues) spans 31–41 (MTSQDSGVSSD). Positions 92–102 (KLNPMAEEFVP) match the PAM2-like motif. Positions 136 to 164 (GGYGNENGGFRRKKSFGQGKRRMNARTSM) are disordered. Basic residues predominate over residues 145 to 159 (FRRKKSFGQGKRRMN). The Bipartite nuclear localization signal motif lies at 146 to 157 (RRKKSFGQGKRR). RRM domains lie at 173–248 (RTVY…PSKT) and 270–346 (RTIY…PSKT).

In terms of tissue distribution, expressed in cauline leaves, stems, immature siliques and primary inflorescences.

The protein localises to the nucleus. In Arabidopsis thaliana (Mouse-ear cress), this protein is Polyadenylate-binding protein-interacting protein 11 (CID11).